A 191-amino-acid chain; its full sequence is Vascular endothelial growth factor A (191 aa).

The signal sequence occupies residues 1–26; the sequence is MNFLLTWIHWGLAALLYFHNAKVLQA. Disulfide bonds link Cys52-Cys94, Cys83-Cys128, and Cys87-Cys130. Asn101 carries an N-linked (GlcNAc...) asparagine glycan.

It belongs to the PDGF/VEGF growth factor family. In terms of assembly, homodimer; disulfide-linked. Also found as heterodimer with PGF. As to expression, expressed by the venom gland, and probably other tissues.

Its subcellular location is the secreted. Growth factor active in angiogenesis, vasculogenesis and endothelial cell growth. Induces endothelial cell proliferation, promotes cell migration, inhibits apoptosis and induces permeabilization of blood vessels. Binds to heparan sulfate and heparin. In Bitis gabonica (Gaboon adder), this protein is Vascular endothelial growth factor A.